The chain runs to 365 residues: UDP-N-acetylglucosamine--N-acetylmuramyl-(pentapeptide) pyrophosphoryl-undecaprenol N-acetylglucosamine transferase (365 aa).

Residues 13–15 (TGG), asparagine 125, arginine 165, serine 192, and glutamine 293 contribute to the UDP-N-acetyl-alpha-D-glucosamine site.

Belongs to the glycosyltransferase 28 family. MurG subfamily.

Its subcellular location is the cell inner membrane. It catalyses the reaction di-trans,octa-cis-undecaprenyl diphospho-N-acetyl-alpha-D-muramoyl-L-alanyl-D-glutamyl-meso-2,6-diaminopimeloyl-D-alanyl-D-alanine + UDP-N-acetyl-alpha-D-glucosamine = di-trans,octa-cis-undecaprenyl diphospho-[N-acetyl-alpha-D-glucosaminyl-(1-&gt;4)]-N-acetyl-alpha-D-muramoyl-L-alanyl-D-glutamyl-meso-2,6-diaminopimeloyl-D-alanyl-D-alanine + UDP + H(+). Its pathway is cell wall biogenesis; peptidoglycan biosynthesis. In terms of biological role, cell wall formation. Catalyzes the transfer of a GlcNAc subunit on undecaprenyl-pyrophosphoryl-MurNAc-pentapeptide (lipid intermediate I) to form undecaprenyl-pyrophosphoryl-MurNAc-(pentapeptide)GlcNAc (lipid intermediate II). The polypeptide is UDP-N-acetylglucosamine--N-acetylmuramyl-(pentapeptide) pyrophosphoryl-undecaprenol N-acetylglucosamine transferase (Ruegeria pomeroyi (strain ATCC 700808 / DSM 15171 / DSS-3) (Silicibacter pomeroyi)).